Here is a 554-residue protein sequence, read N- to C-terminus: Glucose-6-phosphate isomerase (554 aa).

Glu-358 (proton donor) is an active-site residue. Active-site residues include His-389 and Lys-515.

The protein belongs to the GPI family.

Its subcellular location is the cytoplasm. The catalysed reaction is alpha-D-glucose 6-phosphate = beta-D-fructose 6-phosphate. It participates in carbohydrate biosynthesis; gluconeogenesis. It functions in the pathway carbohydrate degradation; glycolysis; D-glyceraldehyde 3-phosphate and glycerone phosphate from D-glucose: step 2/4. In terms of biological role, catalyzes the reversible isomerization of glucose-6-phosphate to fructose-6-phosphate. The protein is Glucose-6-phosphate isomerase of Mycobacterium leprae (strain Br4923).